Consider the following 483-residue polypeptide: Matrix metalloproteinase-20 (483 aa).

The N-terminal stretch at 1–22 is a signal peptide; sequence MKVLPASGLAVFLIMALKFSTA. A propeptide spanning residues 23–107 is cleaved from the precursor; that stretch reads APSLVAASPR…PRCGVPDVAN (85 aa). The Cysteine switch motif lies at 98 to 105; that stretch reads PRCGVPDV. Position 100 (C100) interacts with Zn(2+). Ca(2+) is bound by residues E164, A165, and D166. Zn(2+) is bound by residues H176 and D178. Ca(2+)-binding residues include D183, G184, R186, and T188. H191 is a binding site for Zn(2+). Ca(2+) is bound by residues E197, G198, G200, and D202. H204 is a binding site for Zn(2+). D206 and E209 together coordinate Ca(2+). Position 226 (H226) interacts with Zn(2+). E227 is an active-site residue. Zn(2+) contacts are provided by H230 and H236. Hemopexin repeat units follow at residues 293–343, 344–389, 391–439, and 440–483; these read PDLC…FPQL, MSNV…GFPR, VQQI…FSGV, and NGQI…WIGC. An intrachain disulfide couples C296 to C483.

Belongs to the peptidase M10A family. The cofactor is Zn(2+). Requires Ca(2+) as cofactor. In terms of processing, autoactivates at least at the 107-Asn-|-Tyr-108 site. In terms of tissue distribution, expressed specifically in the enamel organ.

The protein resides in the secreted. The protein localises to the extracellular space. It localises to the extracellular matrix. Functionally, degrades amelogenin, the major protein component of the enamel matrix and two of the macromolecules characterizing the cartilage extracellular matrix: aggrecan and the cartilage oligomeric matrix protein (COMP). May play a central role in tooth enamel formation. Cleaves aggrecan at the '360-Asn-|-Phe-361' site. The protein is Matrix metalloproteinase-20 (MMP20) of Homo sapiens (Human).